The sequence spans 237 residues: LexA repressor (237 aa).

Residues 26–46 (FDEMKDALDLRSKSGIHRLIT) constitute a DNA-binding region (H-T-H motif). Active-site for autocatalytic cleavage activity residues include Ser-158 and Lys-196.

Belongs to the peptidase S24 family. In terms of assembly, homodimer.

The catalysed reaction is Hydrolysis of Ala-|-Gly bond in repressor LexA.. Functionally, represses a number of genes involved in the response to DNA damage (SOS response), including recA and lexA. In the presence of single-stranded DNA, RecA interacts with LexA causing an autocatalytic cleavage which disrupts the DNA-binding part of LexA, leading to derepression of the SOS regulon and eventually DNA repair. The sequence is that of LexA repressor from Rhodopseudomonas palustris (strain BisA53).